Reading from the N-terminus, the 141-residue chain is Holo-[acyl-carrier-protein] synthase (141 aa).

The Mg(2+) site is built by Asp8 and Glu61.

The protein belongs to the P-Pant transferase superfamily. AcpS family. It depends on Mg(2+) as a cofactor.

Its subcellular location is the cytoplasm. The enzyme catalyses apo-[ACP] + CoA = holo-[ACP] + adenosine 3',5'-bisphosphate + H(+). Functionally, transfers the 4'-phosphopantetheine moiety from coenzyme A to a Ser of acyl-carrier-protein. The protein is Holo-[acyl-carrier-protein] synthase of Rhodopseudomonas palustris (strain HaA2).